Reading from the N-terminus, the 755-residue chain is Metabotropic glutamate receptor-like protein B (755 aa).

The N-terminal stretch at 1 to 23 (MKNLISIILLILIFFNYSKFVKS) is a signal peptide. Asparagine 16, asparagine 183, and asparagine 273 each carry an N-linked (GlcNAc...) asparagine glycan. Topologically, residues 24–385 (KNCKIAVLLS…VDYSSSMKLG (362 aa)) are extracellular. A helical membrane pass occupies residues 386-406 (ITITSSICIFLCIISIIIVLV). At 407–417 (FRTARIIKSAS) the chain is on the cytoplasmic side. Residues 418 to 438 (PAFLFLILMGCILIFIGCIIF) form a helical membrane-spanning segment. Residues 439–455 (SQSPNEGTCRARVWLLS) are Extracellular-facing. The helical transmembrane segment at 456–476 (IGYTIFLGSLLVKNWRIWLLF) threads the bilayer. Topologically, residues 477–492 (DNPKLKKRSITNWKLY) are cytoplasmic. The helical transmembrane segment at 493–513 (PWVAGILAADVLILAFWQGLG) threads the bilayer. Over 514-541 (NIRSESRIGIDSLTKYQYTNVCSSNDQG) the chain is Extracellular. Residues 542–562 (SIALYILLVFHGIKLLVACFI) traverse the membrane as a helical segment. Topologically, residues 563–578 (SFKIKVVDIDEFNESK) are cytoplasmic. Residues 579 to 599 (PIASSVYIITFCLFIVIPLMV) form a helical membrane-spanning segment. Topologically, residues 600–607 (SPQSVTSQ) are extracellular. The helical transmembrane segment at 608 to 628 (VTTICVCAIVTTLISIILLFG) threads the bilayer. The Cytoplasmic portion of the chain corresponds to 629-755 (SKFYKMITQG…GEVEIDSNNL (127 aa)). Disordered regions lie at residues 656–676 (QSLE…EENG) and 691–729 (FSSD…NIEE). The segment covering 694-710 (DTEDDENETQQIDEEKD) has biased composition (acidic residues).

The protein in the N-terminal section; belongs to the BMP lipoprotein family. It in the C-terminal section; belongs to the G-protein coupled receptor 3 family. GABA-B receptor subfamily.

The protein resides in the membrane. The chain is Metabotropic glutamate receptor-like protein B (grlB) from Dictyostelium discoideum (Social amoeba).